A 330-amino-acid polypeptide reads, in one-letter code: 4-hydroxythreonine-4-phosphate dehydrogenase (330 aa).

2 residues coordinate substrate: H135 and T136. H165, H210, and H266 together coordinate a divalent metal cation. Substrate is bound by residues K274, N283, and R292.

Belongs to the PdxA family. In terms of assembly, homodimer. The cofactor is Zn(2+). Mg(2+) is required as a cofactor. Requires Co(2+) as cofactor.

Its subcellular location is the cytoplasm. The enzyme catalyses 4-(phosphooxy)-L-threonine + NAD(+) = 3-amino-2-oxopropyl phosphate + CO2 + NADH. It participates in cofactor biosynthesis; pyridoxine 5'-phosphate biosynthesis; pyridoxine 5'-phosphate from D-erythrose 4-phosphate: step 4/5. In terms of biological role, catalyzes the NAD(P)-dependent oxidation of 4-(phosphooxy)-L-threonine (HTP) into 2-amino-3-oxo-4-(phosphooxy)butyric acid which spontaneously decarboxylates to form 3-amino-2-oxopropyl phosphate (AHAP). The sequence is that of 4-hydroxythreonine-4-phosphate dehydrogenase from Vibrio cholerae serotype O1 (strain ATCC 39315 / El Tor Inaba N16961).